The chain runs to 87 residues: Small ribosomal subunit protein uS17 (87 aa).

It belongs to the universal ribosomal protein uS17 family. Part of the 30S ribosomal subunit.

One of the primary rRNA binding proteins, it binds specifically to the 5'-end of 16S ribosomal RNA. In Geobacillus thermodenitrificans (strain NG80-2), this protein is Small ribosomal subunit protein uS17.